The primary structure comprises 312 residues: Aspartate carbamoyltransferase catalytic subunit (312 aa).

Carbamoyl phosphate contacts are provided by arginine 55 and threonine 56. Residue lysine 83 coordinates L-aspartate. Carbamoyl phosphate is bound by residues arginine 105, histidine 138, and glutamine 141. Arginine 171 and arginine 225 together coordinate L-aspartate. Residues glycine 266 and proline 267 each contribute to the carbamoyl phosphate site.

This sequence belongs to the aspartate/ornithine carbamoyltransferase superfamily. ATCase family. As to quaternary structure, heterododecamer (2C3:3R2) of six catalytic PyrB chains organized as two trimers (C3), and six regulatory PyrI chains organized as three dimers (R2).

The catalysed reaction is carbamoyl phosphate + L-aspartate = N-carbamoyl-L-aspartate + phosphate + H(+). The protein operates within pyrimidine metabolism; UMP biosynthesis via de novo pathway; (S)-dihydroorotate from bicarbonate: step 2/3. Functionally, catalyzes the condensation of carbamoyl phosphate and aspartate to form carbamoyl aspartate and inorganic phosphate, the committed step in the de novo pyrimidine nucleotide biosynthesis pathway. The polypeptide is Aspartate carbamoyltransferase catalytic subunit (Corynebacterium efficiens (strain DSM 44549 / YS-314 / AJ 12310 / JCM 11189 / NBRC 100395)).